We begin with the raw amino-acid sequence, 298 residues long: Heme A synthase (298 aa).

Residues 1–6 lie on the Cytoplasmic side of the membrane; sequence MHRSLK. The helical transmembrane segment at 7 to 27 threads the bilayer; sequence IFGTLTSIGMVIVLMQGALVT. The Extracellular segment spans residues 28–62; it reads KTESGEGCGATWPLCFGEVIPTNPAIETIIEYSHR. An intrachain disulfide couples Cys35 to Cys42. Glu58 is an active-site residue. His61 serves as a coordination point for heme o. Residues 63-83 form a helical membrane-spanning segment; it reads IVSGLLGAMVIILAIWAWRKL. Over 84-92 the chain is Cytoplasmic; sequence SHIRETKVM. Residues 93-113 traverse the membrane as a helical segment; sequence AILAVLFIIFQGLLGAGAVVF. The Extracellular portion of the chain corresponds to 114–117; the sequence is GQSH. The chain crosses the membrane as a helical span at residues 118-138; that stretch reads AILALHFGISAISLATVVLLT. His123 is a heme o binding site. Topologically, residues 139 to 158 are cytoplasmic; sequence TLAFEDGKPNPPALIVKKGY. Residues 159-179 traverse the membrane as a helical segment; it reads KGYILAVFAYCYAVIYTGAYV. The Extracellular portion of the chain corresponds to 180 to 209; it reads KHTQATLACGDFPLCNGQWIPMLSGPVGAH. Cysteines 188 and 194 form a disulfide. A helical transmembrane segment spans residues 210 to 230; the sequence is FFHRVAGTLLLILLVVALIWT. His212 contributes to the heme b binding site. The Cytoplasmic segment spans residues 231–244; sequence LRKYSHYRSLVWTH. The helical transmembrane segment at 245-265 threads the bilayer; the sequence is ILCVILVLTQYATGISIVLTG. Residues 266–271 lie on the Extracellular side of the membrane; that stretch reads NELFVA. A helical transmembrane segment spans residues 272–292; it reads MMHALIVSILFTTLCYIVMIL. Heme b is bound at residue His274. Over 293-298 the chain is Cytoplasmic; that stretch reads SRNKAV.

Belongs to the COX15/CtaA family. Type 1 subfamily. In terms of assembly, interacts with CtaB. Heme b is required as a cofactor.

It is found in the cell membrane. The enzyme catalyses Fe(II)-heme o + 2 A + H2O = Fe(II)-heme a + 2 AH2. The protein operates within porphyrin-containing compound metabolism; heme A biosynthesis; heme A from heme O: step 1/1. Catalyzes the conversion of heme O to heme A by two successive hydroxylations of the methyl group at C8. The first hydroxylation forms heme I, the second hydroxylation results in an unstable dihydroxymethyl group, which spontaneously dehydrates, resulting in the formyl group of heme A. The polypeptide is Heme A synthase (Halalkalibacterium halodurans (strain ATCC BAA-125 / DSM 18197 / FERM 7344 / JCM 9153 / C-125) (Bacillus halodurans)).